The primary structure comprises 315 residues: G-box-binding factor 1 (315 aa).

Disordered regions lie at residues 1 to 56 (MGTS…GSPS) and 93 to 268 (MPMP…RDEL). A compositionally biased stretch (pro residues) spans 46–56 (PFFPSPVGSPS). Polar residues-rich tracts occupy residues 133–164 (GSGNDGASHSDESVTAGSSDENDENANQQEQG) and 178–187 (ASSQSTTGEI). The 64-residue stretch at 222–285 (ELKRQKRKQS…DKLKSENNSI (64 aa)) folds into the bZIP domain. A basic motif region spans residues 224-243 (KRQKRKQSNRESARRSRLRK). Over residues 249–262 (QLQQRVESLSNENQ) the composition is skewed to polar residues. Residues 250 to 285 (LQQRVESLSNENQSLRDELQRLSSECDKLKSENNSI) form a leucine-zipper region.

The protein belongs to the bZIP family. As to quaternary structure, monomer and heterodimers with BZIP16 and BZIP68. Interacts with GIP1. Post-translationally, phosphorylated by CK2. As to expression, found in both light and dark grown leaves.

It is found in the nucleus. Binds to the G-box motif (5'-CCACGTGG-3') of the rbcS-1A gene promoter. G-box and G-box-like motifs are cis-acting elements defined in promoters of certain plant genes which are regulated by such diverse stimuli as light-induction or hormone control. Binds to the G-box motif 5'-CACGTG-3' of LHCB2.4 (At3g27690) promoter. May act as transcriptional activator in light-regulated expression of LHCB2.4. Probably binds DNA as monomer. DNA-binding activity is redox-dependent. This Arabidopsis thaliana (Mouse-ear cress) protein is G-box-binding factor 1 (GBF1).